The following is a 563-amino-acid chain: Alpha-keto-acid decarboxylase (563 aa).

Glu-59 provides a ligand contact to thiamine diphosphate. Residues 348-367 form a disordered region; that stretch reads SPPVASPPAEPLPPPPPREQ. The segment covering 351 to 366 has biased composition (pro residues); it reads VASPPAEPLPPPPPRE. The tract at residues 394–476 is thiamine pyrophosphate binding; sequence TSFYGMADHR…VVVNNDGYTV (83 aa). Residues Asp-444, Asn-471, and Gly-473 each coordinate Mg(2+).

Belongs to the TPP enzyme family. The cofactor is a metal cation. Thiamine diphosphate is required as a cofactor.

Functionally, decarboxylates branched-chain and aromatic alpha-keto acids to aldehydes. This Mycobacterium avium (strain 104) protein is Alpha-keto-acid decarboxylase (kdc).